A 256-amino-acid polypeptide reads, in one-letter code: MVPLPWELEEDILSRLAAQSLVRFRSVCKRWNYLFDEKSFIKNHFARACPQFIFMTDSNIYSIEIIGLDGVDPTIKLRVLDSSGIPYRDWKFAYITITACDGFLFCNSWASPKGTAFWNPWLKQVKWIEYEDKGFNVCGLGYDNTRDGKVYKILGYLMCRPEDGSSYVYHQRVAIYDCASHAFKFIEISNKDWFLTDVTRFSVSLNGNLYWLSPIPNTDDFLIQCFDFSREICKPFCLLPCRKFDAFDLLVSFQGR.

An F-box domain is found at 1–44; sequence MVPLPWELEEDILSRLAAQSLVRFRSVCKRWNYLFDEKSFIKNH.

This is Putative F-box protein At3g51171 from Arabidopsis thaliana (Mouse-ear cress).